Here is a 269-residue protein sequence, read N- to C-terminus: Putative phosphoenolpyruvate synthase regulatory protein (269 aa).

149–156 provides a ligand contact to ADP; that stretch reads GVSRSGKT.

The protein belongs to the pyruvate, phosphate/water dikinase regulatory protein family. PSRP subfamily.

It catalyses the reaction [pyruvate, water dikinase] + ADP = [pyruvate, water dikinase]-phosphate + AMP + H(+). It carries out the reaction [pyruvate, water dikinase]-phosphate + phosphate + H(+) = [pyruvate, water dikinase] + diphosphate. Bifunctional serine/threonine kinase and phosphorylase involved in the regulation of the phosphoenolpyruvate synthase (PEPS) by catalyzing its phosphorylation/dephosphorylation. In Pseudoalteromonas translucida (strain TAC 125), this protein is Putative phosphoenolpyruvate synthase regulatory protein.